Reading from the N-terminus, the 686-residue chain is MKLPLLLALVVCSAVSTNLKMVSKRNSVDGCIDWSVDLKTYMALAGEPVRVKCALFYSYIRTNYSMAQSTGLRLMWYRNKGDLEEPIIFSEVRMSKEEDAIWFHSAEEQDSGFYTCVLRNSTYCMKVSMSLTVAENESGLCYNSRIRYLEKSEVTKRKEISCPDMDDFKKSDQEPDVVWYKECKPKMWRSIIIQKGNALLIQEVQEEDGGNYTCELKYEGKLVRRTTELKVTALLTDKPPKPLFPMENQPSVIDVQLGKPLNIPCKAFFGFSGESGPMIYWMKGEKFIEELAGHIREGEIRLLKEHLGEKEVELTLIFDSVVEADLANYTCHVENRNGRKHASVLLRKKDLIYKIELAGGLGAIFLLLILLLVVYKCYNIELMLFYRQRFGGDETTDDNKEYDAYLSYTKVDQDTLDCDNTEEEQFALEILPDVLEKHYGYKLFIPERDLIPSGTYIEDLTRCVEQSRRLIIVLTPDYILRRGWSIFELESRLHNMLVSGEIKVILIECTELKGKVNCQEVESLKHNIKLLSLIKWKGPKSSKLNSKFWKHLVYEMPIKKKEMLSHCHVLDSAEQGLFGELQPIPSIAMTSTSATMVPSQADLPEFHHSDSMQMRHCCRGYQHEMPANTLSVPSLGNHHTYCNLPLTLLNGQLPLNNSLKETEEFSRNNPLLPLTSKELSFTSDIW.

An N-terminal signal peptide occupies residues 1–16 (MKLPLLLALVVCSAVS). The Extracellular segment spans residues 17–354 (TNLKMVSKRN…LLRKKDLIYK (338 aa)). The Ig-like C2-type 1 domain maps to 32–132 (IDWSVDLKTY…YCMKVSMSLT (101 aa)). An intrachain disulfide couples Cys-53 to Cys-116. 5 N-linked (GlcNAc...) asparagine glycosylation sites follow: Asn-63, Asn-120, Asn-136, Asn-211, and Asn-328. 2 Ig-like C2-type domains span residues 141 to 232 (CYNS…LKVT) and 239 to 347 (PPKP…VLLR). Disulfide bonds link Cys-162–Cys-214 and Cys-265–Cys-331. Residues 355-375 (IELAGGLGAIFLLLILLLVVY) form a helical membrane-spanning segment. Residues 376-686 (KCYNIELMLF…KELSFTSDIW (311 aa)) are Cytoplasmic-facing. The region spanning 400 to 556 (KEYDAYLSYT…KFWKHLVYEM (157 aa)) is the TIR domain. The active site involves Glu-488.

This sequence belongs to the interleukin-1 receptor family. As to expression, detected in fetal brain after day 12.5, in particular in parts of the diencephalon and in the basal plate of the spinal cord. In postnatal brain detected in cerebral cortex, olfactory bulb, in the CA1 region of the hippocampus and in Purkinje cells of the Xth cerebellar lobule.

The protein localises to the membrane. The enzyme catalyses NAD(+) + H2O = ADP-D-ribose + nicotinamide + H(+). In Mus musculus (Mouse), this protein is X-linked interleukin-1 receptor accessory protein-like 2 (Il1rapl2).